The chain runs to 394 residues: Elongation factor Tu (394 aa).

One can recognise a tr-type G domain in the interval K10 to E204. Positions G19 to T26 are G1. Position 19 to 26 (G19 to T26) interacts with GTP. Residue T26 participates in Mg(2+) binding. The segment at G60 to N64 is G2. Positions D81–G84 are G3. GTP is bound by residues D81 to H85 and N136 to D139. Residues N136–D139 are G4. The interval S174–L176 is G5.

It belongs to the TRAFAC class translation factor GTPase superfamily. Classic translation factor GTPase family. EF-Tu/EF-1A subfamily. In terms of assembly, monomer.

Its subcellular location is the cytoplasm. The catalysed reaction is GTP + H2O = GDP + phosphate + H(+). Functionally, GTP hydrolase that promotes the GTP-dependent binding of aminoacyl-tRNA to the A-site of ribosomes during protein biosynthesis. The sequence is that of Elongation factor Tu from Neisseria gonorrhoeae.